The primary structure comprises 199 residues: Auxin-responsive protein IAA1 (199 aa).

The EAR-like (transcriptional repression) motif lies at 25–29 (LTLRL). Residues 31-74 (GSLAAAAAPDPDRKRSSPSSSDAADAADNSSPLAAAADAPPAPK) are disordered. Residues 47-69 (SPSSSDAADAADNSSPLAAAADA) show a composition bias toward low complexity. The PB1 domain maps to 93–187 (AKFVKVAVDG…TCQRLRLMKS (95 aa)).

This sequence belongs to the Aux/IAA family. Homodimers and heterodimers. Highly expressed in flowers. Expressed at low levels in roots and shoots.

The protein localises to the nucleus. Functionally, aux/IAA proteins are short-lived transcriptional factors that function as repressors of early auxin response genes at low auxin concentrations. This is Auxin-responsive protein IAA1 (IAA1) from Oryza sativa subsp. japonica (Rice).